The chain runs to 228 residues: Aquaporin Z (228 aa).

Transmembrane regions (helical) follow at residues 1–21 (MLNK…GGCG), 46–66 (TVLT…NPAV), 82–102 (IPYW…LYVI), 129–149 (MMAG…IILG), and 154–174 (LAPA…IHLV). Positions 63 to 65 (NPA) match the NPA 1 motif. An NPA 2 motif is present at residues 184–186 (NPA). Residues 205 to 225 (LFWVAPLVGAVIGAIIWKGLL) form a helical membrane-spanning segment.

It belongs to the MIP/aquaporin (TC 1.A.8) family. In terms of assembly, homotetramer.

Its subcellular location is the cell inner membrane. The catalysed reaction is H2O(in) = H2O(out). Functionally, channel that permits osmotically driven movement of water in both directions. It is involved in the osmoregulation and in the maintenance of cell turgor during volume expansion in rapidly growing cells. It mediates rapid entry or exit of water in response to abrupt changes in osmolarity. The chain is Aquaporin Z from Brucella suis biovar 1 (strain 1330).